Here is a 116-residue protein sequence, read N- to C-terminus: NADH-ubiquinone oxidoreductase chain 3 (116 aa).

The next 3 membrane-spanning stretches (helical) occupy residues 3–23 (LITT…TISF), 56–76 (FFLI…LLPL), and 87–107 (LTLI…IYEW).

It belongs to the complex I subunit 3 family.

It localises to the mitochondrion membrane. The enzyme catalyses a ubiquinone + NADH + 5 H(+)(in) = a ubiquinol + NAD(+) + 4 H(+)(out). Its function is as follows. Core subunit of the mitochondrial membrane respiratory chain NADH dehydrogenase (Complex I) that is believed to belong to the minimal assembly required for catalysis. Complex I functions in the transfer of electrons from NADH to the respiratory chain. The immediate electron acceptor for the enzyme is believed to be ubiquinone. The polypeptide is NADH-ubiquinone oxidoreductase chain 3 (MT-ND3) (Oncorhynchus mykiss (Rainbow trout)).